The following is a 490-amino-acid chain: Protein U94 (490 aa).

The region spanning 1-210 is the PV NS1-Nuc domain; it reads MFSIINPSDD…SHFNKKPNVK (210 aa).

It is found in the host nucleus. The protein is Protein U94 (U94) of Human herpesvirus 6A (strain Uganda-1102) (HHV-6 variant A).